The following is a 332-amino-acid chain: Transcription factor HBP-1b(c38) (332 aa).

The tract at residues 1–48 (MAEASPRTETSTDDTDENLMLEPGNAALAVVSDSSDRSRDKNGDQKTM) is disordered. A compositionally biased stretch (basic and acidic residues) spans 34–47 (SSDRSRDKNGDQKT). Positions 44 to 107 (DQKTMRRLAQ…SSADQSHSMS (64 aa)) constitute a bZIP domain. The tract at residues 46 to 66 (KTMRRLAQNREAARKSRLRKK) is basic motif. Positions 47–142 (TMRRLAQNRE…RAAVNAHAGD (96 aa)) form a coiled coil. The segment at 72–86 (LENSRLKLTQLEQEL) is leucine-zipper. The region spanning 111–329 (ALAFDTEYAR…RALSSLWLAR (219 aa)) is the DOG1 domain.

The protein belongs to the bZIP family. As to quaternary structure, binds DNA as a dimer.

It localises to the nucleus. Functionally, transcriptional activator that binds specifically to the DNA sequence 5'-TGACG-3'. Recognizes ocs elements like the as-1 motif of the cauliflower mosaic virus 35S promoter. Binding to the as-1-like cis elements mediate auxin- and salicylic acid-inducible transcription. Binds to the hexamer motif 5'-ACGTCA-3' of histone gene promoters. The sequence is that of Transcription factor HBP-1b(c38) from Triticum aestivum (Wheat).